A 453-amino-acid polypeptide reads, in one-letter code: Tubulin alpha-2 chain (453 aa).

Glutamine 11 lines the GTP pocket. Lysine 40 is subject to N6-acetyllysine. Residues glutamate 71, glycine 144, threonine 145, threonine 179, asparagine 206, and asparagine 228 each coordinate GTP. A Mg(2+)-binding site is contributed by glutamate 71. Glutamate 254 is a catalytic residue. The segment at 432 to 453 (YEEVGAETAEGEGEEEDFGEEY) is disordered.

The protein belongs to the tubulin family. Dimer of alpha and beta chains. A typical microtubule is a hollow water-filled tube with an outer diameter of 25 nm and an inner diameter of 15 nM. Alpha-beta heterodimers associate head-to-tail to form protofilaments running lengthwise along the microtubule wall with the beta-tubulin subunit facing the microtubule plus end conferring a structural polarity. Microtubules usually have 13 protofilaments but different protofilament numbers can be found in some organisms and specialized cells. Mg(2+) serves as cofactor. In terms of processing, undergoes a tyrosination/detyrosination cycle, the cyclic removal and re-addition of a C-terminal tyrosine residue by the enzymes tubulin tyrosine carboxypeptidase (TTCP) and tubulin tyrosine ligase (TTL), respectively. Post-translationally, acetylation of alpha chains at Lys-40 stabilizes microtubules and affects affinity and processivity of microtubule motors. This modification has a role in multiple cellular functions, ranging from cell motility, cell cycle progression or cell differentiation to intracellular trafficking and signaling.

The protein localises to the cytoplasm. It is found in the cytoskeleton. The catalysed reaction is GTP + H2O = GDP + phosphate + H(+). In terms of biological role, tubulin is the major constituent of microtubules, a cylinder consisting of laterally associated linear protofilaments composed of alpha- and beta-tubulin heterodimers. Microtubules grow by the addition of GTP-tubulin dimers to the microtubule end, where a stabilizing cap forms. Below the cap, tubulin dimers are in GDP-bound state, owing to GTPase activity of alpha-tubulin. In Pelvetia fastigiata (Brown alga), this protein is Tubulin alpha-2 chain (TUBA2).